The sequence spans 193 residues: Putative deoxynucleotide monophosphate kinase (193 aa).

Lysine 10 is a dGMP binding site. Glycine 13 and threonine 16 together coordinate ATP. The dGMP site is built by leucine 36, lysine 37, lysine 58, aspartate 122, arginine 124, glutamate 128, and serine 155.

Belongs to the dNMP kinase family.

The catalysed reaction is a 2'-deoxyribonucleoside 5'-phosphate + ATP = a 2'-deoxyribonucleoside 5'-diphosphate + ADP. The protein is Putative deoxynucleotide monophosphate kinase of Acanthamoeba polyphaga mimivirus (APMV).